Here is a 146-residue protein sequence, read N- to C-terminus: Lysozyme C-2 (146 aa).

Residues 1 to 18 (MKTLLVLALLLLSVSVQA) form the signal peptide. The 128-residue stretch at 19-146 (KVYDRCEFAR…VSQYIRGCKL (128 aa)) folds into the C-type lysozyme domain. 4 disulfide bridges follow: Cys24-Cys144, Cys48-Cys132, Cys81-Cys97, and Cys93-Cys111. Catalysis depends on residues Glu53 and Asp69.

Belongs to the glycosyl hydrolase 22 family. Monomer.

Its subcellular location is the secreted. The enzyme catalyses Hydrolysis of (1-&gt;4)-beta-linkages between N-acetylmuramic acid and N-acetyl-D-glucosamine residues in a peptidoglycan and between N-acetyl-D-glucosamine residues in chitodextrins.. Functionally, lysozymes have primarily a bacteriolytic function; those in tissues and body fluids are associated with the monocyte-macrophage system and enhance the activity of immunoagents. This is Lysozyme C-2 from Sus scrofa (Pig).